Here is a 317-residue protein sequence, read N- to C-terminus: Electron transfer flavoprotein subunit alpha (317 aa).

The protein belongs to the ETF alpha-subunit/FixB family. Heterodimer of an alpha and a beta subunit. Requires FAD as cofactor.

It localises to the cytoplasm. Its pathway is lipid metabolism; butanoate metabolism. Functionally, part of an electron transfer flavoprotein involved in syntrophic growth of S.wolfei with butyrate. Probably receives electrons from butyryl-CoA dehydrogenases, and transfers them to the membrane-bound quinone oxidoreductase Swol_0698. The polypeptide is Electron transfer flavoprotein subunit alpha (Syntrophomonas wolfei subsp. wolfei (strain DSM 2245B / Goettingen)).